The following is a 121-amino-acid chain: uncharacterized protein (121 aa).

3 helical membrane passes run tyrosine 26–threonine 46, serine 57–isoleucine 77, and serine 90–valine 110.

The protein resides in the membrane. This is an uncharacterized protein from Saccharomyces cerevisiae (strain ATCC 204508 / S288c) (Baker's yeast).